Here is a 573-residue protein sequence, read N- to C-terminus: Putative cytochrome c oxidase subunit 1-beta (573 aa).

A helical membrane pass occupies residues 53 to 73 (VIGHLYLATSFGFFLLGGVLA). H100 contributes to the Fe(II)-heme a binding site. Helical transmembrane passes span 103 to 123 (IMML…IMPL), 141 to 161 (WMYL…GGAA), 188 to 208 (GLVV…STII), 227 to 247 (ILFT…ALLM), 272 to 292 (LFWF…FGIV), and 304 to 324 (IFGY…SAVV). Cu cation contacts are provided by H278 and Y282. Positions 278-282 (HPEVY) form a cross-link, 1'-histidyl-3'-tyrosine (His-Tyr). 2 residues coordinate Cu cation: H327 and H328. 2 helical membrane-spanning segments follow: residues 329 to 349 (MFAT…LIAV) and 373 to 393 (MLWA…GVLI). H411 lines the heme a3 pocket. A run of 3 helical transmembrane segments spans residues 412–432 (LHYV…YFWW), 447–467 (IHFW…HWLG), and 490–510 (ISSI…YNVW). H413 serves as a coordination point for Fe(II)-heme a.

Belongs to the heme-copper respiratory oxidase family. As to quaternary structure, associates with subunits II, III and IV to form cytochrome c oxidase. Requires Cu(2+) as cofactor. It depends on heme as a cofactor.

Its subcellular location is the cell membrane. It carries out the reaction 4 Fe(II)-[cytochrome c] + O2 + 8 H(+)(in) = 4 Fe(III)-[cytochrome c] + 2 H2O + 4 H(+)(out). The protein operates within energy metabolism; oxidative phosphorylation. Functionally, cytochrome c oxidase is the component of the respiratory chain that catalyzes the reduction of oxygen to water. Subunits 1-3 form the functional core of the enzyme complex. CO I is the catalytic subunit of the enzyme. Electrons originating in cytochrome c are transferred via the copper A center of subunit 2 and heme A of subunit 1 to the bimetallic center formed by heme A3 and copper B. The protein is Putative cytochrome c oxidase subunit 1-beta (ctaD2) of Streptomyces coelicolor (strain ATCC BAA-471 / A3(2) / M145).